Reading from the N-terminus, the 273-residue chain is Putative phosphoenolpyruvate synthase regulatory protein (273 aa).

153–160 (AVSRAGKT) is a binding site for ADP.

This sequence belongs to the pyruvate, phosphate/water dikinase regulatory protein family. PSRP subfamily.

It carries out the reaction [pyruvate, water dikinase] + ADP = [pyruvate, water dikinase]-phosphate + AMP + H(+). The enzyme catalyses [pyruvate, water dikinase]-phosphate + phosphate + H(+) = [pyruvate, water dikinase] + diphosphate. Bifunctional serine/threonine kinase and phosphorylase involved in the regulation of the phosphoenolpyruvate synthase (PEPS) by catalyzing its phosphorylation/dephosphorylation. This is Putative phosphoenolpyruvate synthase regulatory protein from Xanthomonas campestris pv. campestris (strain 8004).